The chain runs to 115 residues: SPbeta prophage-derived uncharacterized membrane protein YosE (115 aa).

3 consecutive transmembrane segments (helical) span residues Ile20–Asn42, Val58–Gly78, and Gly95–Ile115.

The protein localises to the cell membrane. The polypeptide is SPbeta prophage-derived uncharacterized membrane protein YosE (yosE) (Bacillus subtilis (strain 168)).